Reading from the N-terminus, the 469-residue chain is Argininosuccinate lyase (469 aa).

This sequence belongs to the lyase 1 family. Argininosuccinate lyase subfamily.

It is found in the cytoplasm. It catalyses the reaction 2-(N(omega)-L-arginino)succinate = fumarate + L-arginine. It functions in the pathway amino-acid biosynthesis; L-arginine biosynthesis; L-arginine from L-ornithine and carbamoyl phosphate: step 3/3. The polypeptide is Argininosuccinate lyase (Cupriavidus metallidurans (strain ATCC 43123 / DSM 2839 / NBRC 102507 / CH34) (Ralstonia metallidurans)).